Reading from the N-terminus, the 139-residue chain is Nucleoside diphosphate kinase (139 aa).

Positions 10, 58, 86, 92, 104, and 114 each coordinate ATP. H117 (pros-phosphohistidine intermediate) is an active-site residue.

The protein belongs to the NDK family. In terms of assembly, homotetramer. It depends on Mg(2+) as a cofactor.

It localises to the cytoplasm. The catalysed reaction is a 2'-deoxyribonucleoside 5'-diphosphate + ATP = a 2'-deoxyribonucleoside 5'-triphosphate + ADP. It catalyses the reaction a ribonucleoside 5'-diphosphate + ATP = a ribonucleoside 5'-triphosphate + ADP. Major role in the synthesis of nucleoside triphosphates other than ATP. The ATP gamma phosphate is transferred to the NDP beta phosphate via a ping-pong mechanism, using a phosphorylated active-site intermediate. The chain is Nucleoside diphosphate kinase from Rhodococcus jostii (strain RHA1).